The primary structure comprises 335 residues: Ferrochelatase (335 aa).

Residues histidine 207 and glutamate 288 each contribute to the Fe cation site.

Belongs to the ferrochelatase family.

It is found in the cytoplasm. It carries out the reaction heme b + 2 H(+) = protoporphyrin IX + Fe(2+). Its pathway is porphyrin-containing compound metabolism; protoheme biosynthesis; protoheme from protoporphyrin-IX: step 1/1. Its function is as follows. Catalyzes the ferrous insertion into protoporphyrin IX. This is Ferrochelatase from Helicobacter pylori (strain G27).